The chain runs to 197 residues: uncharacterized protein (197 aa).

Positions 168 to 185 are enriched in basic and acidic residues; the sequence is QRDDFSEDSHANDPKLVG. Residues 168–197 are disordered; the sequence is QRDDFSEDSHANDPKLVGDDYVPQAPEQIN.

This is an uncharacterized protein from Escherichia coli (strain K12).